Reading from the N-terminus, the 485-residue chain is Rop guanine nucleotide exchange factor 2 (485 aa).

Residues 1-36 form a disordered region; it reads MENLPNHEENDDVGYHQSPGPIDPNDHSASETPVYS. The PRONE domain maps to 107–485; sequence LAVQEISEPE…YVDKTMRGEE (379 aa).

As to quaternary structure, interacts with ARC10/ROP11. As to expression, expressed in the vascular tissues of roots, leaves, sepals, petals and siliques.

Functionally, guanine-nucleotide exchange factor (GEF) that acts as an activator of Rop (Rho of plants) GTPases by promoting the exchange of GDP for GTP. The chain is Rop guanine nucleotide exchange factor 2 (ROPGEF2) from Arabidopsis thaliana (Mouse-ear cress).